The chain runs to 130 residues: Small ribosomal subunit protein uS11c (130 aa).

This sequence belongs to the universal ribosomal protein uS11 family. As to quaternary structure, part of the 30S ribosomal subunit.

The protein localises to the plastid. It is found in the chloroplast. In Marchantia polymorpha (Common liverwort), this protein is Small ribosomal subunit protein uS11c.